The chain runs to 306 residues: Putative S-adenosyl-L-methionine-dependent methyltransferase Mvan_1345 (306 aa).

S-adenosyl-L-methionine is bound by residues aspartate 134 and 163–164 (DL).

Belongs to the UPF0677 family.

Its function is as follows. Exhibits S-adenosyl-L-methionine-dependent methyltransferase activity. This chain is Putative S-adenosyl-L-methionine-dependent methyltransferase Mvan_1345, found in Mycolicibacterium vanbaalenii (strain DSM 7251 / JCM 13017 / BCRC 16820 / KCTC 9966 / NRRL B-24157 / PYR-1) (Mycobacterium vanbaalenii).